The sequence spans 42 residues: Photosystem I reaction center subunit IX (42 aa).

The helical transmembrane segment at 7-27 (FLSTAPVLIMALLTVTAGILI) threads the bilayer.

Belongs to the PsaJ family.

It is found in the cellular thylakoid membrane. In terms of biological role, may help in the organization of the PsaE and PsaF subunits. The polypeptide is Photosystem I reaction center subunit IX (Crocosphaera subtropica (strain ATCC 51142 / BH68) (Cyanothece sp. (strain ATCC 51142))).